The chain runs to 35 residues: Non-specific lipid-transfer protein 1 (35 aa).

Residues Cys13 and Cys28 are joined by a disulfide bond.

Seeds.

Functionally, plant non-specific lipid-transfer proteins transfer phospholipids as well as galactolipids across membranes. May play a role in wax or cutin deposition in the cell walls of expanding epidermal cells and certain secretory tissues. Inhibits the growth of F.oxysporum and P.infestans. The chain is Non-specific lipid-transfer protein 1 from Nigella sativa (Black cumin).